The primary structure comprises 244 residues: RNA transcription, translation and transport factor protein (244 aa).

N6-acetyllysine is present on residues Lys-20, Lys-62, and Lys-98.

This sequence belongs to the RTRAF family. As to quaternary structure, homodimer. Interacts with FAM98A (via N- and C-terminus). Interacts with NIN; which may prevent phosphorylation of NIN. Interacts with POLR2A. Component of a tRNA-splicing ligase complex.

It is found in the nucleus. The protein resides in the cytoplasm. The protein localises to the cytosol. Its subcellular location is the perinuclear region. It localises to the cytoskeleton. It is found in the microtubule organizing center. The protein resides in the centrosome. RNA-binding protein involved in modulation of mRNA transcription by Polymerase II. Component of the tRNA-splicing ligase complex and is required for tRNA ligation. May be required for RNA transport. The protein is RNA transcription, translation and transport factor protein of Mus musculus (Mouse).